Here is a 550-residue protein sequence, read N- to C-terminus: Hydroxylamine reductase (550 aa).

The [2Fe-2S] cluster site is built by Cys3, Cys6, Cys18, and Cys25. Residues His249, Glu273, Cys317, Cys405, Cys433, Cys458, Glu492, and Lys494 each coordinate hybrid [4Fe-2O-2S] cluster. Residue Cys405 is modified to Cysteine persulfide.

It belongs to the HCP family. The cofactor is [2Fe-2S] cluster. Hybrid [4Fe-2O-2S] cluster serves as cofactor.

The protein resides in the cytoplasm. It carries out the reaction A + NH4(+) + H2O = hydroxylamine + AH2 + H(+). Its function is as follows. Catalyzes the reduction of hydroxylamine to form NH(3) and H(2)O. In Salmonella paratyphi A (strain ATCC 9150 / SARB42), this protein is Hydroxylamine reductase.